Reading from the N-terminus, the 325-residue chain is Olfactory receptor 10AC1 (325 aa).

Over 1-26 (MDSPSNATVPCGFLLQGFSEFPHLRP) the chain is Extracellular. N-linked (GlcNAc...) asparagine glycosylation occurs at Asn-6. A helical membrane pass occupies residues 27–47 (VLFLLLLGVHLATLGGNLLIL). The Cytoplasmic segment spans residues 48–57 (VAVASMPSRQ). The chain crosses the membrane as a helical span at residues 58 to 78 (PMLLFLCQLSAIELCYTLVVV). Topologically, residues 79–101 (PRSLVDLSTPGHRRGSPISFLSC) are extracellular. Residues 102–122 (AFQMQMFVALGGAECFLLAAM) form a helical membrane-spanning segment. The Cytoplasmic segment spans residues 123–147 (AYDRYVAICHPLRYAAVVTPGLCAR). The chain crosses the membrane as a helical span at residues 148–168 (LALACCLRGLAVSVGLTVAIF). Topologically, residues 169 to 171 (HLP) are extracellular. A helical transmembrane segment spans residues 172-192 (FCGSRLLLHFFCDITALLHLA). The Cytoplasmic segment spans residues 193–200 (CTRSYADE). Residues 201–221 (LPLLGACLVLLLLPSVLILAS) form a helical membrane-spanning segment. At 222 to 243 (YGAIAAALRRLRCPKGRGKAAS) the chain is on the extracellular side. The chain crosses the membrane as a helical span at residues 244–264 (TCALHLAVTFLHYGCATFMYV). The Cytoplasmic segment spans residues 265 to 325 (RPRASYSPRL…QAPGGDLREL (61 aa)).

Belongs to the G-protein coupled receptor 1 family.

It localises to the cell membrane. Odorant receptor. In Homo sapiens (Human), this protein is Olfactory receptor 10AC1 (OR10AC1).